The chain runs to 205 residues: CASP-like protein 0U1 (205 aa).

The Cytoplasmic segment spans residues 1 to 38 (MDDAPGASDEAREPLLKRVGASVEGTSLMNHRLMKNPK). A helical membrane pass occupies residues 39 to 57 (FRALLVESLMALTTFSFMA). Topologically, residues 58-89 (KQTEGLAGPELSTLNDCGEAGCGFTKFYQFKG) are extracellular. A helical transmembrane segment spans residues 90–110 (VVGVYAGFWAYTVILIAMYVI). Topologically, residues 111–124 (RKAPPPGTEFASYA) are cytoplasmic. A helical transmembrane segment spans residues 125 to 145 (LFTAAMATFVVMSITECASVV). Topologically, residues 146–159 (LSSDYYVCKNADYS) are extracellular. Residues 160–180 (LVSLIFAAATIVLNCLTCAFA) form a helical membrane-spanning segment. The Cytoplasmic portion of the chain corresponds to 181–205 (WRQWGELKFVGLPKTLSALTETYPG).

This sequence belongs to the Casparian strip membrane proteins (CASP) family. Homodimer and heterodimers.

The protein resides in the cell membrane. The polypeptide is CASP-like protein 0U1 (Ostreococcus lucimarinus (strain CCE9901)).